The sequence spans 44 residues: Protein Tat (44 aa).

Residues 1–44 form a disordered region; sequence APEDSQSHQVSLSKQPASQAGGDPTGPKESKKKVESETETDPVP. Residues 7–18 show a composition bias toward polar residues; that stretch reads SHQVSLSKQPAS. Lysine 14 participates in a covalent cross-link: Glycyl lysine isopeptide (Lys-Gly) (interchain with G-Cter in ubiquitin). The Cell attachment site signature appears at 21–23; it reads GGD. Over residues 26–36 the composition is skewed to basic and acidic residues; sequence GPKESKKKVES.

This sequence belongs to the lentiviruses Tat family. In terms of assembly, interacts with host CCNT1. Associates with the P-TEFb complex composed at least of Tat, P-TEFb (CDK9 and CCNT1), TAR RNA, RNA Pol II. Recruits the HATs CREBBP, TAF1/TFIID, EP300, PCAF and GCN5L2. Interacts with host KAT5/Tip60; this interaction targets the latter to degradation. Interacts with the host deacetylase SIRT1. Interacts with host capping enzyme RNGTT; this interaction stimulates RNGTT. Binds to host KDR, and to the host integrins ITGAV/ITGB3 and ITGA5/ITGB1. Interacts with host KPNB1/importin beta-1 without previous binding to KPNA1/importin alpha-1. Interacts with EIF2AK2. Interacts with host nucleosome assembly protein NAP1L1; this interaction may be required for the transport of Tat within the nucleus, since the two proteins interact at the nuclear rim. Interacts with host C1QBP/SF2P32; this interaction involves lysine-acetylated Tat. Interacts with the host chemokine receptors CCR2, CCR3 and CXCR4. Interacts with host DPP4/CD26; this interaction may trigger an anti-proliferative effect. Interacts with host LDLR. Interacts with the host extracellular matrix metalloproteinase MMP1. Interacts with host PRMT6; this interaction mediates Tat's methylation. Interacts with, and is ubiquitinated by MDM2/Hdm2. Interacts with host PSMC3 and HTATIP2. Interacts with STAB1; this interaction may overcome SATB1-mediated repression of IL2 and IL2RA (interleukin) in T cells by binding to the same domain than HDAC1. Interacts (when acetylated) with human CDK13, thereby increasing HIV-1 mRNA splicing and promoting the production of the doubly spliced HIV-1 protein Nef. Acetylation by EP300, CREBBP, GCN5L2/GCN5 and PCAF regulates the transactivation activity of Tat. Post-translationally, phosphorylated by EIF2AK2 on serine and threonine residues adjacent to the basic region important for TAR RNA binding and function. Phosphorylation of Tat by EIF2AK2 is dependent on the prior activation of EIF2AK2 by dsRNA. In terms of processing, asymmetrical arginine methylation by host PRMT6 seems to diminish the transactivation capacity of Tat and affects the interaction with host CCNT1. Polyubiquitination by MDM2 does not target Tat to degradation, but activates its transactivation function and fosters interaction with CCNT1 and TAR RNA.

Its subcellular location is the host nucleus. It localises to the host nucleolus. The protein resides in the host cytoplasm. The protein localises to the secreted. Transcriptional activator that increases RNA Pol II processivity, thereby increasing the level of full-length viral transcripts. Recognizes a hairpin structure at the 5'-LTR of the nascent viral mRNAs referred to as the transactivation responsive RNA element (TAR) and recruits the cyclin T1-CDK9 complex (P-TEFb complex) that will in turn hyperphosphorylate the RNA polymerase II to allow efficient elongation. The CDK9 component of P-TEFb and other Tat-activated kinases hyperphosphorylate the C-terminus of RNA Pol II that becomes stabilized and much more processive. Other factors such as HTATSF1/Tat-SF1, SUPT5H/SPT5, and HTATIP2 are also important for Tat's function. Besides its effect on RNA Pol II processivity, Tat induces chromatin remodeling of proviral genes by recruiting the histone acetyltransferases (HATs) CREBBP, EP300 and PCAF to the chromatin. This also contributes to the increase in proviral transcription rate, especially when the provirus integrates in transcriptionally silent region of the host genome. To ensure maximal activation of the LTR, Tat mediates nuclear translocation of NF-kappa-B by interacting with host RELA. Through its interaction with host TBP, Tat may also modulate transcription initiation. Tat can reactivate a latently infected cell by penetrating in it and transactivating its LTR promoter. In the cytoplasm, Tat is thought to act as a translational activator of HIV-1 mRNAs. In terms of biological role, extracellular circulating Tat can be endocytosed by surrounding uninfected cells via the binding to several surface receptors such as CD26, CXCR4, heparan sulfate proteoglycans (HSPG) or LDLR. Neurons are rarely infected, but they internalize Tat via their LDLR. Endosomal low pH allows Tat to cross the endosome membrane to enter the cytosol and eventually further translocate into the nucleus, thereby inducing severe cell dysfunctions ranging from cell activation to cell death. Through its interaction with nuclear HATs, Tat is potentially able to control the acetylation-dependent cellular gene expression. Tat seems to inhibit the HAT activity of KAT5/Tip60 and TAF1, and consequently modify the expression of specific cellular genes. Modulates the expression of many cellular genes involved in cell survival, proliferation or in coding for cytokines (such as IL10) or cytokine receptors. May be involved in the derepression of host interleukin IL2 expression. Mediates the activation of cyclin-dependent kinases and dysregulation of microtubule network. Tat plays a role in T-cell and neurons apoptosis. Tat induced neurotoxicity and apoptosis probably contribute to neuroAIDS. Host extracellular matrix metalloproteinase MMP1 cleaves Tat and decreases Tat's mediated neurotoxicity. Circulating Tat also acts as a chemokine-like and/or growth factor-like molecule that binds to specific receptors on the surface of the cells, affecting many cellular pathways. In the vascular system, Tat binds to ITGAV/ITGB3 and ITGA5/ITGB1 integrins dimers at the surface of endothelial cells and competes with bFGF for heparin-binding sites, leading to an excess of soluble bFGF. Binds to KDR/VEGFR-2. All these Tat-mediated effects enhance angiogenesis in Kaposi's sarcoma lesions. The chain is Protein Tat from Human immunodeficiency virus type 1 group M subtype B (isolate BRVA) (HIV-1).